We begin with the raw amino-acid sequence, 133 residues long: Large ribosomal subunit protein uL15 (133 aa).

The tract at residues 1–64 is disordered; the sequence is MGLENLKPAK…QPLQRRLPKI (64 aa).

This sequence belongs to the universal ribosomal protein uL15 family. In terms of assembly, part of the 50S ribosomal subunit.

Functionally, binds to the 23S rRNA. The chain is Large ribosomal subunit protein uL15 from Helicobacter pylori (strain J99 / ATCC 700824) (Campylobacter pylori J99).